A 181-amino-acid polypeptide reads, in one-letter code: Adenylate kinase (181 aa).

Gly-10–Thr-15 is a binding site for ATP. Residues Ser-30–Val-59 form an NMP region. Residues Thr-31, Arg-36, Asp-57–Val-59, Gly-85–Arg-88, and Gln-92 each bind AMP. The segment at Gly-126–Asp-132 is LID. Position 127 (Arg-127) interacts with ATP. Residues Arg-129 and Arg-140 each coordinate AMP. Residue Gly-166 coordinates ATP.

This sequence belongs to the adenylate kinase family. Monomer.

It localises to the cytoplasm. It carries out the reaction AMP + ATP = 2 ADP. Its pathway is purine metabolism; AMP biosynthesis via salvage pathway; AMP from ADP: step 1/1. Functionally, catalyzes the reversible transfer of the terminal phosphate group between ATP and AMP. Plays an important role in cellular energy homeostasis and in adenine nucleotide metabolism. The chain is Adenylate kinase from Mycobacterium marinum (strain ATCC BAA-535 / M).